We begin with the raw amino-acid sequence, 150 residues long: Meiotically up-regulated gene 108 protein (150 aa).

Polar residues predominate over residues M1–T11. Residues M1–I150 are disordered. The span at Q12 to S23 shows a compositional bias: basic and acidic residues. Residues N83–N93 are compositionally biased toward polar residues.

It is found in the cytoplasm. The protein localises to the nucleus. Functionally, has a role in meiosis. In Schizosaccharomyces pombe (strain 972 / ATCC 24843) (Fission yeast), this protein is Meiotically up-regulated gene 108 protein (mug108).